The chain runs to 795 residues: Protocadherin beta-4 (795 aa).

A signal peptide spans 1–27; sequence MKKLGRIHPNRQVLAFILMVFLSQVRL. Over 28 to 689 the chain is Extracellular; it reads EPIRYSVLEE…SQADSLTVYL (662 aa). Cadherin domains lie at 34–132, 137–241, 246–346, 351–450, and 455–560; these read VLEE…SPVF, VLLK…APEF, YGVQ…PPEL, LTSS…APAF, and YTLF…SPFV. N-linked (GlcNAc...) asparagine glycosylation occurs at Asn-183. A glycan (N-linked (GlcNAc...) asparagine) is linked at Asn-417. N-linked (GlcNAc...) asparagine glycosylation occurs at Asn-566. The region spanning 567–670 is the Cadherin 6 domain; that stretch reads GSAPCTELVP…LVDGFSQPYL (104 aa). Residues 690–710 form a helical membrane-spanning segment; it reads VVALASVSSLFLFSVLLFVAV. Residues 711-795 are Cytoplasmic-facing; it reads RLCRRSRAAS…PKFRNSLVFS (85 aa).

The protein localises to the cell membrane. Potential calcium-dependent cell-adhesion protein. May be involved in the establishment and maintenance of specific neuronal connections in the brain. The sequence is that of Protocadherin beta-4 (PCDHB4) from Pan troglodytes (Chimpanzee).